The sequence spans 195 residues: NADH-quinone oxidoreductase subunit B (195 aa).

[4Fe-4S] cluster contacts are provided by Cys-74, Cys-75, Cys-139, and Cys-169.

Belongs to the complex I 20 kDa subunit family. NDH-1 is composed of 14 different subunits. Subunits NuoB, C, D, E, F, and G constitute the peripheral sector of the complex. The cofactor is [4Fe-4S] cluster.

Its subcellular location is the cell inner membrane. The catalysed reaction is a quinone + NADH + 5 H(+)(in) = a quinol + NAD(+) + 4 H(+)(out). In terms of biological role, NDH-1 shuttles electrons from NADH, via FMN and iron-sulfur (Fe-S) centers, to quinones in the respiratory chain. The immediate electron acceptor for the enzyme in this species is believed to be ubiquinone. Couples the redox reaction to proton translocation (for every two electrons transferred, four hydrogen ions are translocated across the cytoplasmic membrane), and thus conserves the redox energy in a proton gradient. The protein is NADH-quinone oxidoreductase subunit B of Methylobacterium radiotolerans (strain ATCC 27329 / DSM 1819 / JCM 2831 / NBRC 15690 / NCIMB 10815 / 0-1).